We begin with the raw amino-acid sequence, 217 residues long: MTHRVDQEYDYLFKIVLIGDSGVGKSNILSRFTRNEFCLESKSTIGVEFATRTTQVEGKTIKAQIWDTAGQERYRAITSAYYRGAVGALLVYDITKRQTFDNVLRWLRELRDHADSNIVIMMAGNKSDLNHLRSVAEEDGQSLAEKEGLSFLETSALEATNVEKAFQTILGEIYHIISKKALAAQEAAAANSAIPGQGTTINVDDTSGGAKRACCSS.

GTP-binding positions include 19 to 27 (GDSGVGKSN), 38 to 44 (CLESKST), 67 to 71 (DTAGQ), 125 to 128 (NKSD), and 155 to 157 (SAL). Residues 41–49 (SKSTIGVEF) carry the Effector region motif. The segment at 195 to 217 (PGQGTTINVDDTSGGAKRACCSS) is disordered. Residues C214 and C215 are each lipidated (S-geranylgeranyl cysteine).

This sequence belongs to the small GTPase superfamily. Rab family. In terms of tissue distribution, expressed in root tips.

The protein localises to the endosome membrane. The protein resides in the golgi apparatus. It localises to the trans-Golgi network membrane. In terms of biological role, intracellular vesicle trafficking and protein transport. This Arabidopsis thaliana (Mouse-ear cress) protein is Ras-related protein RABA2c (RABA2C).